A 43-amino-acid polypeptide reads, in one-letter code: uncharacterized protein (43 aa).

It belongs to the ELIP/psbS family.

The protein resides in the plastid. The protein localises to the chloroplast. Its function is as follows. Possible role in chlorophyll and/or carotenoid binding. This is an uncharacterized protein from Cyanidium caldarium (Red alga).